Reading from the N-terminus, the 309-residue chain is Golgi-associated RAB2 interactor protein 1A (309 aa).

Phosphoserine is present on residues Ser-231, Ser-263, and Ser-267.

This sequence belongs to the GARIN family. Interacts (via N-terminus) with RAB2B (in GTP-bound form).

It is found in the golgi apparatus. In terms of biological role, RAB2B effector protein required for accurate acrosome formation and normal male fertility. This chain is Golgi-associated RAB2 interactor protein 1A, found in Homo sapiens (Human).